The following is a 153-amino-acid chain: Ribonuclease H (153 aa).

Residues 1 to 142 (MTPEVVIYTD…ADALARKGLS (142 aa)) form the RNase H type-1 domain. Positions 10, 48, 70, and 134 each coordinate Mg(2+).

This sequence belongs to the RNase H family. In terms of assembly, monomer. Requires Mg(2+) as cofactor.

The protein resides in the cytoplasm. It carries out the reaction Endonucleolytic cleavage to 5'-phosphomonoester.. Endonuclease that specifically degrades the RNA of RNA-DNA hybrids. The chain is Ribonuclease H from Phenylobacterium zucineum (strain HLK1).